The following is a 196-amino-acid chain: DnaA initiator-associating protein DiaA (196 aa).

Residues 34-196 form the SIS domain; it reads LVQSLLNGNK…DNTLFPHQDD (163 aa).

The protein belongs to the SIS family. DiaA subfamily. Homotetramer; dimer of dimers.

In terms of biological role, required for the timely initiation of chromosomal replication via direct interactions with the DnaA initiator protein. This is DnaA initiator-associating protein DiaA from Yersinia enterocolitica serotype O:8 / biotype 1B (strain NCTC 13174 / 8081).